Reading from the N-terminus, the 237-residue chain is uncharacterized protein (237 aa).

A run of 7 helical transmembrane segments spans residues 19-39, 51-71, 81-101, 106-126, 136-156, 159-179, and 209-229; these read ILNG…GLAW, YDSP…YGLS, IAGV…ASLV, IIIV…AGLL, FIIM…AALM, RPIW…ISHG, and LYYY…TLVW.

Its subcellular location is the cell membrane. This is an uncharacterized protein from Escherichia coli (strain K12).